We begin with the raw amino-acid sequence, 655 residues long: DNA topoisomerase 4 subunit B (655 aa).

ATP contacts are provided by residues Y9, N49, D76, 116–122 (GLHGVGA), and K340. A compositionally biased stretch (basic and acidic residues) spans 387 to 397 (AARKAREEARS). The interval 387–419 (AARKAREEARSGKKRKKSEATLSGKLTPAGSRN) is disordered. The 115-residue stretch at 423–537 (NELYLVEGDS…HGKVFIALPP (115 aa)) folds into the Toprim domain. Residues E429, D502, and D504 each contribute to the Mg(2+) site.

It belongs to the type II topoisomerase family. ParE type 2 subfamily. Heterotetramer composed of ParC and ParE. The cofactor is Mg(2+). It depends on Mn(2+) as a cofactor. Ca(2+) serves as cofactor.

It catalyses the reaction ATP-dependent breakage, passage and rejoining of double-stranded DNA.. Topoisomerase IV is essential for chromosome segregation. It relaxes supercoiled DNA. Performs the decatenation events required during the replication of a circular DNA molecule. The polypeptide is DNA topoisomerase 4 subunit B (Bacillus subtilis (strain 168)).